A 533-amino-acid polypeptide reads, in one-letter code: Probable lipid II flippase MurJ (533 aa).

The next 14 helical transmembrane spans lie at 11–31 (LANI…FGLL), 39–61 (AFGV…FLFI), 96–116 (LVSG…GIFI), 135–155 (LQIM…FGTL), 166–186 (ISPL…VWQL), 196–216 (WLLG…LQWL), 253–273 (LSSG…SFIP), 284–304 (FVAL…FLPV), 330–350 (LTMF…VQVI), 360–380 (AAAE…FYLG), 400–420 (VSLF…KPFG), 422–442 (VGIV…FIWM), 452–472 (LGGW…ASVA), and 493–513 (ILEV…GVAL).

Belongs to the MurJ/MviN family.

It is found in the cell inner membrane. The protein operates within cell wall biogenesis; peptidoglycan biosynthesis. Involved in peptidoglycan biosynthesis. Transports lipid-linked peptidoglycan precursors from the inner to the outer leaflet of the cytoplasmic membrane. The protein is Probable lipid II flippase MurJ of Synechocystis sp. (strain ATCC 27184 / PCC 6803 / Kazusa).